The chain runs to 394 residues: MAKEKFERTKPHVNVGTIGHVDHGKTTLTAAITTVLSKTYGGSAQAFDQIDNAPEEKARGITISTSHVEYDTPTRHYAHVDCPGHADYVKNMITGAAQMDGGILVVAATDGPMPQTREHILLGRQVGIPYIIVFMNKCDMVDDEELLELVEMEVRELLNEYEFPGDDLPVIQGSALKALEGDAEWEKKIIELGEALDSYIPEPERAIDKPFILPIEDVFSISGRGTVVTGRVEQGIIKVGEEVEIVGIKDTTKTTCTGVEMFRKLLDEGRAGENVGVLLRGTKRDEVERGQVLAKPGSITPHVNFEAEVYVLSKDEGGRHTPFFKGYRPQFYFRTTDVTGAVELPEGVEMVMPGDNLKFKVELIAPIAMEEGLRFAIREGGRTVGAGVVSKILD.

The region spanning Lys-10–Glu-204 is the tr-type G domain. The G1 stretch occupies residues Gly-19–Thr-26. Gly-19–Thr-26 lines the GTP pocket. Thr-26 provides a ligand contact to Mg(2+). Residues Gly-60 to Ser-64 are G2. The segment at Asp-81–Gly-84 is G3. Residues Asp-81–His-85 and Asn-136–Asp-139 each bind GTP. The G4 stretch occupies residues Asn-136–Asp-139. Residues Ser-174–Leu-176 are G5.

Belongs to the TRAFAC class translation factor GTPase superfamily. Classic translation factor GTPase family. EF-Tu/EF-1A subfamily. In terms of assembly, monomer.

The protein resides in the cytoplasm. The catalysed reaction is GTP + H2O = GDP + phosphate + H(+). Functionally, GTP hydrolase that promotes the GTP-dependent binding of aminoacyl-tRNA to the A-site of ribosomes during protein biosynthesis. This is Elongation factor Tu from Alteromonas mediterranea (strain DSM 17117 / CIP 110805 / LMG 28347 / Deep ecotype).